Reading from the N-terminus, the 172-residue chain is Shikimate kinase (172 aa).

14-19 (GAGKST) is an ATP binding site. Serine 18 contributes to the Mg(2+) binding site. Residues aspartate 36, arginine 60, and glycine 82 each contribute to the substrate site. Arginine 120 provides a ligand contact to ATP. Arginine 140 is a binding site for substrate. Residue glutamine 157 participates in ATP binding.

This sequence belongs to the shikimate kinase family. As to quaternary structure, monomer. Mg(2+) is required as a cofactor.

The protein localises to the cytoplasm. It catalyses the reaction shikimate + ATP = 3-phosphoshikimate + ADP + H(+). Its pathway is metabolic intermediate biosynthesis; chorismate biosynthesis; chorismate from D-erythrose 4-phosphate and phosphoenolpyruvate: step 5/7. Functionally, catalyzes the specific phosphorylation of the 3-hydroxyl group of shikimic acid using ATP as a cosubstrate. The sequence is that of Shikimate kinase from Pseudoalteromonas translucida (strain TAC 125).